The chain runs to 183 residues: Oligoribonuclease (183 aa).

Residues 9 to 172 (LIWIDLEMTG…DDIRESIEEL (164 aa)) form the Exonuclease domain. Tyr-130 is a catalytic residue.

Belongs to the oligoribonuclease family.

The protein localises to the cytoplasm. 3'-to-5' exoribonuclease specific for small oligoribonucleotides. The chain is Oligoribonuclease from Haemophilus ducreyi (strain 35000HP / ATCC 700724).